Here is a 216-residue protein sequence, read N- to C-terminus: Probable transaldolase (216 aa).

The Schiff-base intermediate with substrate role is filled by Lys-83.

The protein belongs to the transaldolase family. Type 3B subfamily.

Its subcellular location is the cytoplasm. It catalyses the reaction D-sedoheptulose 7-phosphate + D-glyceraldehyde 3-phosphate = D-erythrose 4-phosphate + beta-D-fructose 6-phosphate. It functions in the pathway carbohydrate degradation; pentose phosphate pathway; D-glyceraldehyde 3-phosphate and beta-D-fructose 6-phosphate from D-ribose 5-phosphate and D-xylulose 5-phosphate (non-oxidative stage): step 2/3. In terms of biological role, transaldolase is important for the balance of metabolites in the pentose-phosphate pathway. The protein is Probable transaldolase of Hyphomonas neptunium (strain ATCC 15444).